The primary structure comprises 146 residues: Catabolic 3-dehydroquinase (146 aa).

Residue Tyr24 is the Proton acceptor of the active site. The substrate site is built by Asn78, His84, and Asp91. Residue His104 is the Proton donor of the active site. Substrate is bound by residues 105–106 (IT) and Arg115.

The protein belongs to the type-II 3-dehydroquinase family. As to quaternary structure, homododecamer. Adopts a ring-like structure, composed of an arrangement of two hexameric rings stacked on top of one another.

The catalysed reaction is 3-dehydroquinate = 3-dehydroshikimate + H2O. Its pathway is aromatic compound metabolism; 3,4-dihydroxybenzoate biosynthesis; 3,4-dihydroxybenzoate from 3-dehydroquinate: step 1/2. Is involved in the catabolism of quinate. Allows the utilization of quinate as carbon source via the beta-ketoadipate pathway. This chain is Catabolic 3-dehydroquinase, found in Candida dubliniensis (strain CD36 / ATCC MYA-646 / CBS 7987 / NCPF 3949 / NRRL Y-17841) (Yeast).